We begin with the raw amino-acid sequence, 295 residues long: Glycine--tRNA ligase alpha subunit (295 aa).

It belongs to the class-II aminoacyl-tRNA synthetase family. As to quaternary structure, tetramer of two alpha and two beta subunits.

It localises to the cytoplasm. The enzyme catalyses tRNA(Gly) + glycine + ATP = glycyl-tRNA(Gly) + AMP + diphosphate. This Prochlorococcus marinus (strain MIT 9215) protein is Glycine--tRNA ligase alpha subunit.